The following is a 652-amino-acid chain: MKKRIKELTDLLNRYRYDYYTKDAPSVSDSDYDKLYRELVTLEQSYPEYVLQDSPTQQVGGTILKGFEKYRHQYPLFSLQDAFSREELDAFDKRVKAEFPNATYLAELKIDGLSISLSYENGFLQVGATRGDGNIGENITENIKKIKDIPHQLSEPLTITVRGEAYMSRQSFKAINEARQENGETEFANPRNAAAGTLRQLDTAVVAKRELATFLYQEASPTARNQQNEVLAELADLGFSVNPYYQLTSSMDEIWDFIKTIEAKRDQLAYDIDGVVIKVNSLAMQEELGFTVKAPRWAIAYKFPAEEKEAEILSVDWTVGRTGVVTPTANLTPVQLAGTTVSRATLHNVDYIAEKDIRIGDTVIVYKAGDIIPAVLNVVMSKRNQQEVMLIPKLCPSCGSELVHFEDEVALRCINPLCPSLIQRSLEHFASRDAMNITGLGPAIVEKLFLAGFVHDVADIYQLTKENFMQLDGIKEKSADKLLAAIEASKSNSAEKLLFGLGIRHIGSKVSRLILEVYGDISALLTAKEEEIARIDGLGSTIAQSLTQYFEQKTAAILVDELKTAGVNMHYSGQKVNSDAALFGLTVVLTGKLNQLNRNEAKDKLEALGAKVTGSVSKKTDLVIAGSDAGSKLEKAKSLGIRIEDEDWLRQL.

Residues 29–33 (DSDYD), 78–79 (SL), and Glu-107 each bind NAD(+). Lys-109 serves as the catalytic N6-AMP-lysine intermediate. Positions 130, 164, 278, and 302 each coordinate NAD(+). 4 residues coordinate Zn(2+): Cys-395, Cys-398, Cys-413, and Cys-418. The 76-residue stretch at 577–652 (NSDAALFGLT…IEDEDWLRQL (76 aa)) folds into the BRCT domain.

Belongs to the NAD-dependent DNA ligase family. LigA subfamily. Requires Mg(2+) as cofactor. The cofactor is Mn(2+).

It catalyses the reaction NAD(+) + (deoxyribonucleotide)n-3'-hydroxyl + 5'-phospho-(deoxyribonucleotide)m = (deoxyribonucleotide)n+m + AMP + beta-nicotinamide D-nucleotide.. Functionally, DNA ligase that catalyzes the formation of phosphodiester linkages between 5'-phosphoryl and 3'-hydroxyl groups in double-stranded DNA using NAD as a coenzyme and as the energy source for the reaction. It is essential for DNA replication and repair of damaged DNA. This Streptococcus pyogenes serotype M49 (strain NZ131) protein is DNA ligase.